We begin with the raw amino-acid sequence, 483 residues long: SWI/SNF-related matrix-associated actin-dependent regulator of chromatin subfamily D member 3 (483 aa).

Position 2 is an N-acetylalanine (Ala-2). The disordered stretch occupies residues Val-26 to Lys-102. The segment covering Gln-78 to Pro-87 has biased composition (low complexity). Ser-178 bears the Phosphoserine mark. An SWIB/MDM2 domain is found at Tyr-258–Pro-335.

It belongs to the SMARCD family. As to quaternary structure, component of the multiprotein chromatin-remodeling complexes SWI/SNF: SWI/SNF-A (BAF), SWI/SNF-B (PBAF) and related complexes. The canonical complex contains a catalytic subunit (either SMARCA4/BRG1/BAF190A or SMARCA2/BRM/BAF190B) and at least SMARCE1, ACTL6A/BAF53, SMARCC1/BAF155, SMARCC2/BAF170, and SMARCB1/SNF5/BAF47. Other subunits specific to each of the complexes may also be present permitting several possible combinations developmentally and tissue specific. Component of the BAF complex, which includes at least actin (ACTB), ARID1A/BAF250A, ARID1B/BAF250B, SMARCA2/BRM, SMARCA4/BRG1/BAF190A, ACTL6A/BAF53, ACTL6B/BAF53B, SMARCE1/BAF57, SMARCC1/BAF155, SMARCC2/BAF170, SMARCB1/SNF5/INI1, and one or more SMARCD1/BAF60A, SMARCD2/BAF60B, or SMARCD3/BAF60C. In muscle cells, the BAF complex also contains DPF3. Component of neural progenitors-specific chromatin remodeling complex (npBAF complex) composed of at least, ARID1A/BAF250A or ARID1B/BAF250B, SMARCD1/BAF60A, SMARCD3/BAF60C, SMARCA2/BRM/BAF190B, SMARCA4/BRG1/BAF190A, SMARCB1/BAF47, SMARCC1/BAF155, SMARCE1/BAF57, SMARCC2/BAF170, PHF10/BAF45A, ACTL6A/BAF53A and actin. Component of neuron-specific chromatin remodeling complex (nBAF complex) composed of at least, ARID1A/BAF250A or ARID1B/BAF250B, SMARCD1/BAF60A, SMARCD3/BAF60C, SMARCA2/BRM/BAF190B, SMARCA4/BRG1/BAF190A, SMARCB1/BAF47, SMARCC1/BAF155, SMARCE1/BAF57, SMARCC2/BAF170, DPF1/BAF45B, DPF3/BAF45C, ACTL6B/BAF53B and actin. May be a component of the SWI/SNF-B (PBAF) chromatin remodeling complex, at least composed of SMARCA4/BRG1, SMARCB1/BAF47/SNF5, ACTL6A/BAF53A or ACTL6B/BAF53B, SMARCE1/BAF57, SMARCD1/BAF60A, SMARCD2/BAF60B, perhaps SMARCD3/BAF60C, SMARCC1/BAF155, SMARCC2/BAF170, PBRM1/BAF180, ARID2/BAF200 and actin. Interacts with SMARCA4/BRG1/BAF190A. Component of SWI/SNF (GBAF) subcomplex, which includes at least BICRA or BICRAL (mutually exclusive), BRD9, SS18, SMARCA2/BRM, SMARCA4/BRG1/BAF190A, ACTL6A/BAF53, SMARCC1/BAF155, and SMARCD1/BAF60A. The precise distribution of the related SMARCD1, SMARCD2 and SMARCD3 proteins among these and other SWI/SNF nucleosome-remodeling complexes is not fully known. May allow recruitment of SWI/SNF containing complexes specifically to promoters where these factors are located. Also interacts with several nuclear receptors including PPARG/NR1C3, RXRA/NR1F1, ESR1, NR5A1, NR5A2/LRH1 and other transcriptional activators including the HLH protein SREBF1/SREBP1 and the homeobox protein PBX1. Interacts with PRDM1/BLIMP1. As to expression, isoform 2 and isoform 1 are expressed in brain, heart, kidney, placenta, prostate, salivary gland, spleen, testis, thyroid, trachea and uterus. Isoform 1 is also expressed in skeletal muscle and adipose tissue.

The protein localises to the nucleus. In terms of biological role, involved in transcriptional activation and repression of select genes by chromatin remodeling (alteration of DNA-nucleosome topology). Component of SWI/SNF chromatin remodeling complexes that carry out key enzymatic activities, changing chromatin structure by altering DNA-histone contacts within a nucleosome in an ATP-dependent manner. Stimulates nuclear receptor mediated transcription. Belongs to the neural progenitors-specific chromatin remodeling complex (npBAF complex) and the neuron-specific chromatin remodeling complex (nBAF complex). During neural development a switch from a stem/progenitor to a postmitotic chromatin remodeling mechanism occurs as neurons exit the cell cycle and become committed to their adult state. The transition from proliferating neural stem/progenitor cells to postmitotic neurons requires a switch in subunit composition of the npBAF and nBAF complexes. As neural progenitors exit mitosis and differentiate into neurons, npBAF complexes which contain ACTL6A/BAF53A and PHF10/BAF45A, are exchanged for homologous alternative ACTL6B/BAF53B and DPF1/BAF45B or DPF3/BAF45C subunits in neuron-specific complexes (nBAF). The npBAF complex is essential for the self-renewal/proliferative capacity of the multipotent neural stem cells. The nBAF complex along with CREST plays a role regulating the activity of genes essential for dendrite growth. The polypeptide is SWI/SNF-related matrix-associated actin-dependent regulator of chromatin subfamily D member 3 (SMARCD3) (Homo sapiens (Human)).